The chain runs to 209 residues: High frequency lysogenization protein HflD homolog (209 aa).

Belongs to the HflD family.

It localises to the cytoplasm. The protein localises to the cell inner membrane. In Marinomonas sp. (strain MWYL1), this protein is High frequency lysogenization protein HflD homolog.